A 167-amino-acid chain; its full sequence is Single-stranded DNA-binding protein 2 (167 aa).

The region spanning 1–104 is the SSB domain; sequence MLNRVVLVGR…VVCDSVQFLE (104 aa). Residues 107–167 are disordered; it reads NAQQNGGQRQ…IDISDDDLPF (61 aa). Low complexity-rich tracts occupy residues 109–118 and 132–147; these read QQNGGQRQQN and SGQNNSYNNSSNTKQS. The Important for interaction with partner proteins signature appears at 162-167; sequence DDDLPF.

As to quaternary structure, homotetramer.

Its function is as follows. Plays an important role in DNA replication, recombination and repair. Binds to ssDNA and to an array of partner proteins to recruit them to their sites of action during DNA metabolism. The protein is Single-stranded DNA-binding protein 2 (ssb2) of Staphylococcus aureus (strain MSSA476).